Reading from the N-terminus, the 389-residue chain is Alkanesulfonate monooxygenase (389 aa).

The protein belongs to the SsuD family.

The enzyme catalyses an alkanesulfonate + FMNH2 + O2 = an aldehyde + FMN + sulfite + H2O + 2 H(+). In terms of biological role, catalyzes the desulfonation of aliphatic sulfonates. The polypeptide is Alkanesulfonate monooxygenase (Rhizobium etli (strain CIAT 652)).